The following is a 567-amino-acid chain: Urease subunit alpha (567 aa).

One can recognise a Urease domain in the interval 129–567 (GGIDTHIHFI…LPMAQRYFLF (439 aa)). Residues histidine 134, histidine 136, and lysine 217 each contribute to the Ni(2+) site. Lysine 217 is modified (N6-carboxylysine). Histidine 219 is a binding site for substrate. Ni(2+) contacts are provided by histidine 246 and histidine 272. Residue histidine 320 is the Proton donor of the active site. Aspartate 360 lines the Ni(2+) pocket.

This sequence belongs to the metallo-dependent hydrolases superfamily. Urease alpha subunit family. In terms of assembly, heterotrimer of UreA (gamma), UreB (beta) and UreC (alpha) subunits. Three heterotrimers associate to form the active enzyme. It depends on Ni cation as a cofactor. Post-translationally, carboxylation allows a single lysine to coordinate two nickel ions.

It is found in the cytoplasm. It carries out the reaction urea + 2 H2O + H(+) = hydrogencarbonate + 2 NH4(+). Its pathway is nitrogen metabolism; urea degradation; CO(2) and NH(3) from urea (urease route): step 1/1. The sequence is that of Urease subunit alpha from Delftia acidovorans (strain DSM 14801 / SPH-1).